The chain runs to 239 residues: Large ribosomal subunit protein uL1 (239 aa).

The protein belongs to the universal ribosomal protein uL1 family. As to quaternary structure, part of the 50S ribosomal subunit.

Binds directly to 23S rRNA. The L1 stalk is quite mobile in the ribosome, and is involved in E site tRNA release. Its function is as follows. Protein L1 is also a translational repressor protein, it controls the translation of the L11 operon by binding to its mRNA. The chain is Large ribosomal subunit protein uL1 from Acidothermus cellulolyticus (strain ATCC 43068 / DSM 8971 / 11B).